A 445-amino-acid polypeptide reads, in one-letter code: FAD-dependent monooxygenase sorC (445 aa).

A helical transmembrane segment spans residues 8–28; it reads PFEVAIVGGGITGLALAVGLL. The N-linked (GlcNAc...) asparagine glycan is linked to Asn-31. Positions 38 and 119 each coordinate FAD. The active site involves Arg-201. Asp-323 and Ala-336 together coordinate FAD. Asn-358 is a glycosylation site (N-linked (GlcNAc...) asparagine).

Belongs to the paxM FAD-dependent monooxygenase family. Requires FAD as cofactor.

It is found in the membrane. The protein operates within secondary metabolite biosynthesis. FAD-dependent monooxygenase; part of the gene cluster that mediates the biosynthesis of sorbicillinoids, a diverse group of yellow secondary metabolites that restrict growth of competing pathogenic fungi but not of bacteria. Sorbicillinoids biosynthesis requires the action of two PKSs. SorA iteratively combines three acetyl units and the growing chain is modified by the ketoacyl reductase subunit, and optional by the enoyl reductase subunit in the second cycle. The polyketide is then handed over to the PKS SorB, which adds three more acetyl units, and two methyl groups. SorB releases an aldehyde, which undergoes spontaneous cyclization resulting in the formation of sorbicillin or 2',3'-dihydrosorbicillin. The monooxygenase sorC oxidizes sorbicillin and 2',3'-dihydrosorbicillin to 2',3'-dihydrosorbicillinol and sorbicillinol, respectively. The oxidoreductase sorD further converts sorbicillinol into oxosorbicillinol. Sorbicillinol is the building block for the other sorbicillinoids such as disorbicillinol, bisvertinolon, and dihydrobisvertinolone. The protein is FAD-dependent monooxygenase sorC of Penicillium rubens (strain ATCC 28089 / DSM 1075 / NRRL 1951 / Wisconsin 54-1255) (Penicillium chrysogenum).